We begin with the raw amino-acid sequence, 251 residues long: S-acyl fatty acid synthase thioesterase, medium chain (251 aa).

Active-site residues include serine 90 and histidine 226.

This sequence belongs to the thioesterase family.

It carries out the reaction (9Z)-octadecenoyl-[ACP] + H2O = (9Z)-octadecenoate + holo-[ACP] + H(+). In terms of biological role, in fatty acid biosynthesis chain termination and release of the free fatty acid product is achieved by hydrolysis of the thio ester by a thioesterase I, a component of the fatty acid synthetase complex. The chain length of the released fatty acid is usually C16. However, in the mammary glands of non-ruminant mammals, and in the uropygial gland of certain waterfowl there exists a second thioesterase which releases medium-chain length fatty acids (C8 to C2). The sequence is that of S-acyl fatty acid synthase thioesterase, medium chain from Anas platyrhynchos (Mallard).